Consider the following 46-residue polypeptide: DNA-directed RNA polymerase subunit Rpo12 (46 aa).

Cys-9, Cys-24, and Cys-27 together coordinate Zn(2+).

This sequence belongs to the archaeal Rpo12/eukaryotic RPC10 RNA polymerase subunit family. Part of the RNA polymerase complex. Interacts with Rpo3. Forms an Rpo3-Rpo10-Rpo11-Rpo12 complex upon coexpression. Zn(2+) is required as a cofactor.

It is found in the cytoplasm. It catalyses the reaction RNA(n) + a ribonucleoside 5'-triphosphate = RNA(n+1) + diphosphate. DNA-dependent RNA polymerase (RNAP) catalyzes the transcription of DNA into RNA using the four ribonucleoside triphosphates as substrates. The protein is DNA-directed RNA polymerase subunit Rpo12 of Methanocaldococcus jannaschii (strain ATCC 43067 / DSM 2661 / JAL-1 / JCM 10045 / NBRC 100440) (Methanococcus jannaschii).